The following is a 233-amino-acid chain: Adenosylcobinamide-GDP ribazoletransferase (233 aa).

The next 7 membrane-spanning stretches (helical) occupy residues 24–44, 46–66, 96–116, 117–137, 156–176, 184–204, and 209–229; these read LWAF…VLYL, LPLS…LLHL, IAGL…LQLV, PFYA…LALA, SGQL…VVVY, LLGL…FGGI, and IGAI…FAGA.

The protein belongs to the CobS family. Mg(2+) is required as a cofactor.

Its subcellular location is the cell membrane. It carries out the reaction alpha-ribazole + adenosylcob(III)inamide-GDP = adenosylcob(III)alamin + GMP + H(+). It catalyses the reaction alpha-ribazole 5'-phosphate + adenosylcob(III)inamide-GDP = adenosylcob(III)alamin 5'-phosphate + GMP + H(+). It functions in the pathway cofactor biosynthesis; adenosylcobalamin biosynthesis; adenosylcobalamin from cob(II)yrinate a,c-diamide: step 7/7. Functionally, joins adenosylcobinamide-GDP and alpha-ribazole to generate adenosylcobalamin (Ado-cobalamin). Also synthesizes adenosylcobalamin 5'-phosphate from adenosylcobinamide-GDP and alpha-ribazole 5'-phosphate. The sequence is that of Adenosylcobinamide-GDP ribazoletransferase from Thermococcus onnurineus (strain NA1).